Consider the following 155-residue polypeptide: SsrA-binding protein (155 aa).

Positions 135 to 147 (TIKRRDQERDIKK) are enriched in basic and acidic residues. The interval 135–155 (TIKRRDQERDIKKQMKHYNAR) is disordered.

Belongs to the SmpB family.

The protein resides in the cytoplasm. In terms of biological role, required for rescue of stalled ribosomes mediated by trans-translation. Binds to transfer-messenger RNA (tmRNA), required for stable association of tmRNA with ribosomes. tmRNA and SmpB together mimic tRNA shape, replacing the anticodon stem-loop with SmpB. tmRNA is encoded by the ssrA gene; the 2 termini fold to resemble tRNA(Ala) and it encodes a 'tag peptide', a short internal open reading frame. During trans-translation Ala-aminoacylated tmRNA acts like a tRNA, entering the A-site of stalled ribosomes, displacing the stalled mRNA. The ribosome then switches to translate the ORF on the tmRNA; the nascent peptide is terminated with the 'tag peptide' encoded by the tmRNA and targeted for degradation. The ribosome is freed to recommence translation, which seems to be the essential function of trans-translation. In Streptococcus pyogenes serotype M12 (strain MGAS2096), this protein is SsrA-binding protein.